Reading from the N-terminus, the 301-residue chain is uncharacterized protein (301 aa).

This sequence belongs to the asfivirus E301R family. Interacts with host IRF3.

Functionally, plays a role in the inhibition of host innate immune system by acting as a negatively regulator of type I interferon production. Mechanistically, interacts with and prevents host IRF3 nuclear localization to inhibit its transcriptional activity. This is an uncharacterized protein from African swine fever virus (isolate Warthog/Namibia/Wart80/1980) (ASFV).